Consider the following 600-residue polypeptide: Epidermal growth factor receptor kinase substrate 8-like protein 3 (600 aa).

In terms of domain architecture, PTB spans 28–155; it reads QHRVEHLMTC…ALEEELEERP (128 aa). Disordered regions lie at residues 152–245 and 429–452; these read EERP…PERD and LHFP…PLSS. The segment covering 204-214 has biased composition (low complexity); it reads SERSISPSSRS. The residue at position 238 (S238) is a Phosphoserine. Residues 457–516 enclose the SH3 domain; the sequence is RAALKMQVLYEFEARNAQELTVAQGEILEVLDQSKRWWLVKNEAGLTGYIPSNILEPLPA.

Belongs to the EPS8 family. As to quaternary structure, interacts with ABI1. Part of a complex that contains SOS1, ABI1 and EPS8L2. Interacts with FASLG. Detected in embryonic gut. Detected in adult testis, placenta, adrenal gland and intestine.

Its subcellular location is the cytoplasm. This is Epidermal growth factor receptor kinase substrate 8-like protein 3 (Eps8l3) from Mus musculus (Mouse).